The chain runs to 166 residues: Photosystem I assembly protein Ycf3 (166 aa).

TPR repeat units lie at residues 35-68, 72-105, and 120-153; these read AFTYYRNGMSAQSEGEYAEALQNYYQALRYEIDA, SYMLYNIGLIHSSNGQQSKALEYYYQALDRNPRL, and GEQALINNQDEISKIFFDKAADYWKEAIRLSPTS.

It belongs to the Ycf3 family.

It is found in the plastid. It localises to the chloroplast thylakoid membrane. Functionally, essential for the assembly of the photosystem I (PSI) complex. May act as a chaperone-like factor to guide the assembly of the PSI subunits. This Bigelowiella natans (Pedinomonas minutissima) protein is Photosystem I assembly protein Ycf3.